The following is a 149-amino-acid chain: MLMRSDPFRELDRFAHQVLGTAARPAVMPMDAWRQGEEFVVEFDLPGIDADSLDIDIERNVVTVRAERPALDPNREMLATERPRGVFSRQLVLGENLDTDKIQASYSEGVLSLHIPVAEKAKPRKIAVGRGDGHHAVAEGAAQREVINA.

Residues 21–131 (TAARPAVMPM…KPRKIAVGRG (111 aa)) form the sHSP domain.

It belongs to the small heat shock protein (HSP20) family.

Not known. This protein is one of the major immune reactive proteins in mycobacteria. The polypeptide is 18 kDa antigen 1 (Mycobacterium intracellulare).